The following is a 507-amino-acid chain: Histidine ammonia-lyase (507 aa).

Residues 143-145 (ASG) constitute a cross-link (5-imidazolinone (Ala-Gly)). The residue at position 144 (Ser144) is a 2,3-didehydroalanine (Ser).

It belongs to the PAL/histidase family. Post-translationally, contains an active site 4-methylidene-imidazol-5-one (MIO), which is formed autocatalytically by cyclization and dehydration of residues Ala-Ser-Gly.

Its subcellular location is the cytoplasm. It carries out the reaction L-histidine = trans-urocanate + NH4(+). The protein operates within amino-acid degradation; L-histidine degradation into L-glutamate; N-formimidoyl-L-glutamate from L-histidine: step 1/3. The protein is Histidine ammonia-lyase of Alkaliphilus oremlandii (strain OhILAs) (Clostridium oremlandii (strain OhILAs)).